A 624-amino-acid polypeptide reads, in one-letter code: Bifunctional protein ArgH (624 aa).

The interval 1–466 (MALWGGRFSQ…QERDNAGVKV (466 aa)) is argininosuccinate lyase. The 151-residue stretch at 464-614 (VKVRPARLTD…DEVALEVNLQ (151 aa)) folds into the N-acetyltransferase domain. Positions 467-624 (RPARLTDLDA…EQVIIKSSVA (158 aa)) are probable acetyltransferase.

The protein in the N-terminal section; belongs to the lyase 1 family. Argininosuccinate lyase subfamily.

Its subcellular location is the cytoplasm. It catalyses the reaction 2-(N(omega)-L-arginino)succinate = fumarate + L-arginine. The protein operates within amino-acid biosynthesis; L-arginine biosynthesis; L-arginine from L-ornithine and carbamoyl phosphate: step 3/3. The chain is Bifunctional protein ArgH (argH) from Aliivibrio fischeri (strain ATCC 700601 / ES114) (Vibrio fischeri).